An 899-amino-acid polypeptide reads, in one-letter code: Suppressor of glycerol defect protein 1 (899 aa).

Residues 24–33 (QDERFSISEG) show a composition bias toward basic and acidic residues. Disordered stretches follow at residues 24 to 181 (QDER…VSYP) and 248 to 326 (ETNS…DDSE). The span at 34–49 (KKRRRGNGKHLSRKEK) shows a compositional bias: basic residues. A compositionally biased stretch (polar residues) spans 65-77 (REINSSRLKSAPT). Residues 103 to 126 (DESESNENWDSDEVLTDEVAEESG) show a composition bias toward acidic residues. Basic and acidic residues-rich tracts occupy residues 134 to 143 (ETMKKLESLK), 162 to 174 (SYEK…RDTN), and 251 to 264 (SMRK…KAFS). The segment covering 265–292 (SDDDLSASDFEDSDGLSESDNDSVADSD) has biased composition (acidic residues). Positions 335-540 (SKKVNSSLNK…DTMSDLKNNR (206 aa)) constitute an MIF4G domain. The 138-residue stretch at 644–781 (DIRRAIFISI…KLDVFKHVPF (138 aa)) folds into the MI domain. Serine 736 carries the phosphoserine modification.

It belongs to the CWC22 family. As to quaternary structure, interacts with PLC1.

It localises to the nucleus. Its subcellular location is the nucleolus. Its function is as follows. Involved in osmoregulatory glycerol response, probably through its interaction with PLC1 which regulates the expression of GDP1. The chain is Suppressor of glycerol defect protein 1 (SGD1) from Saccharomyces cerevisiae (strain ATCC 204508 / S288c) (Baker's yeast).